The sequence spans 190 residues: RNA pyrophosphohydrolase (190 aa).

The Nudix hydrolase domain maps to 6 to 149 (GYRPNVGIIL…KRDVYTQALN (144 aa)). The Nudix box motif lies at 38–59 (GGIKYGESPVQAMYRELHEEVG). Residues 167–190 (QRVHGPRSTDNPSSETDGHAHIAG) are disordered.

Belongs to the Nudix hydrolase family. RppH subfamily. A divalent metal cation is required as a cofactor.

Functionally, accelerates the degradation of transcripts by removing pyrophosphate from the 5'-end of triphosphorylated RNA, leading to a more labile monophosphorylated state that can stimulate subsequent ribonuclease cleavage. This is RNA pyrophosphohydrolase from Bordetella parapertussis (strain 12822 / ATCC BAA-587 / NCTC 13253).